A 340-amino-acid chain; its full sequence is Flap endonuclease 1 (340 aa).

The segment at 1–98 is N-domain; sequence MGVPIGEIIP…KELEKRREAR (98 aa). The Mg(2+) site is built by Asp27, Asp80, Glu152, Glu154, Asp173, Asp175, and Asp236. Positions 116-258 are I-domain; that stretch reads EARKYAQRAT…KALEIVRHSK (143 aa). The tract at residues 330 to 338 is interaction with PCNA; it reads KQSTLESWF.

It belongs to the XPG/RAD2 endonuclease family. FEN1 subfamily. In terms of assembly, interacts with PCNA. PCNA stimulates the nuclease activity without altering cleavage specificity. The cofactor is Mg(2+).

In terms of biological role, structure-specific nuclease with 5'-flap endonuclease and 5'-3' exonuclease activities involved in DNA replication and repair. During DNA replication, cleaves the 5'-overhanging flap structure that is generated by displacement synthesis when DNA polymerase encounters the 5'-end of a downstream Okazaki fragment. Binds the unpaired 3'-DNA end and kinks the DNA to facilitate 5' cleavage specificity. Cleaves one nucleotide into the double-stranded DNA from the junction in flap DNA, leaving a nick for ligation. Also involved in the base excision repair (BER) pathway. Acts as a genome stabilization factor that prevents flaps from equilibrating into structures that lead to duplications and deletions. Also possesses 5'-3' exonuclease activity on nicked or gapped double-stranded DNA. The chain is Flap endonuclease 1 from Pyrococcus furiosus (strain ATCC 43587 / DSM 3638 / JCM 8422 / Vc1).